A 538-amino-acid polypeptide reads, in one-letter code: uncharacterized protein (538 aa).

4 disordered regions span residues 20-71 (RLSA…GGAQ), 151-211 (LWAE…EHPK), 288-331 (MLQP…QQHK), and 458-482 (EFEK…LKNY). Residues 154–171 (ESEKSESKGTRRDFRSYD) are compositionally biased toward basic and acidic residues.

This is an uncharacterized protein from Homo sapiens (Human).